A 349-amino-acid polypeptide reads, in one-letter code: NADH-ubiquinone oxidoreductase chain 2 (349 aa).

Helical transmembrane passes span 3-23, 66-86, 98-118, 139-159, 178-198, 199-219, 240-260, 274-294, and 319-339; these read PYVL…TFAS, AAAM…EWEI, VMLA…LPEV, FALM…TIGL, ILAY…QFAP, SLTL…FLTL, LAAL…LSGF, GLPL…YFYL, and FTMI…LLPL.

This sequence belongs to the complex I subunit 2 family.

The protein resides in the mitochondrion inner membrane. The catalysed reaction is a ubiquinone + NADH + 5 H(+)(in) = a ubiquinol + NAD(+) + 4 H(+)(out). Its function is as follows. Core subunit of the mitochondrial membrane respiratory chain NADH dehydrogenase (Complex I) that is believed to belong to the minimal assembly required for catalysis. Complex I functions in the transfer of electrons from NADH to the respiratory chain. The immediate electron acceptor for the enzyme is believed to be ubiquinone. This chain is NADH-ubiquinone oxidoreductase chain 2 (MT-ND2), found in Oncorhynchus mykiss (Rainbow trout).